We begin with the raw amino-acid sequence, 341 residues long: Elongation factor Ts (341 aa).

The interval 80–83 (TDFV) is involved in Mg(2+) ion dislocation from EF-Tu.

It belongs to the EF-Ts family.

It localises to the cytoplasm. Its function is as follows. Associates with the EF-Tu.GDP complex and induces the exchange of GDP to GTP. It remains bound to the aminoacyl-tRNA.EF-Tu.GTP complex up to the GTP hydrolysis stage on the ribosome. The protein is Elongation factor Ts of Lactobacillus johnsonii (strain CNCM I-12250 / La1 / NCC 533).